A 479-amino-acid polypeptide reads, in one-letter code: 3-phytase B (479 aa).

An N-terminal signal peptide occupies residues 1–19; sequence MPRTSLLTLACALATGASA. Residue His-82 is the Nucleophile of the active site. 5 N-linked (GlcNAc...) asparagine glycosylation sites follow: Asn-106, Asn-191, Asn-227, Asn-250, and Asn-315. The active-site Proton donor is Asp-338. N-linked (GlcNAc...) asparagine glycosylation is found at Asn-425, Asn-442, and Asn-458.

It belongs to the histidine acid phosphatase family.

It carries out the reaction 1D-myo-inositol hexakisphosphate + H2O = 1D-myo-inositol 1,2,4,5,6-pentakisphosphate + phosphate. Functionally, catalyzes the hydrolysis of inorganic orthophosphate from phytate. This chain is 3-phytase B (phyB), found in Aspergillus niger.